Consider the following 275-residue polypeptide: Sulfur carrier protein FdhD (275 aa).

Residue cysteine 121 is the Cysteine persulfide intermediate of the active site. Residue 258–263 coordinates Mo-bis(molybdopterin guanine dinucleotide); it reads FSKPGR.

This sequence belongs to the FdhD family.

Its subcellular location is the cytoplasm. Its function is as follows. Required for formate dehydrogenase (FDH) activity. Acts as a sulfur carrier protein that transfers sulfur from IscS to the molybdenum cofactor prior to its insertion into FDH. This chain is Sulfur carrier protein FdhD, found in Yersinia enterocolitica serotype O:8 / biotype 1B (strain NCTC 13174 / 8081).